Consider the following 665-residue polypeptide: Fructose-1,6-bisphosphatase class 3 (665 aa).

Belongs to the FBPase class 3 family. Mn(2+) serves as cofactor.

It carries out the reaction beta-D-fructose 1,6-bisphosphate + H2O = beta-D-fructose 6-phosphate + phosphate. The protein operates within carbohydrate biosynthesis; gluconeogenesis. The protein is Fructose-1,6-bisphosphatase class 3 of Clostridium acetobutylicum (strain ATCC 824 / DSM 792 / JCM 1419 / IAM 19013 / LMG 5710 / NBRC 13948 / NRRL B-527 / VKM B-1787 / 2291 / W).